Here is a 155-residue protein sequence, read N- to C-terminus: Small ribosomal subunit protein uS7cz/uS7cy (155 aa).

Belongs to the universal ribosomal protein uS7 family. In terms of assembly, part of the 30S ribosomal subunit.

The protein localises to the plastid. The protein resides in the chloroplast. Functionally, one of the primary rRNA binding proteins, it binds directly to 16S rRNA where it nucleates assembly of the head domain of the 30S subunit. The protein is Small ribosomal subunit protein uS7cz/uS7cy (rps7-A) of Pelargonium hortorum (Common geranium).